The primary structure comprises 165 residues: Sulfopyruvate decarboxylase subunit alpha (165 aa).

It belongs to the ComD family. As to quaternary structure, heterododecamer composed of 6 subunits alpha and 6 subunits beta.

The catalysed reaction is 3-sulfopyruvate + H(+) = sulfoacetaldehyde + CO2. It functions in the pathway cofactor biosynthesis; coenzyme M biosynthesis; sulfoacetaldehyde from phosphoenolpyruvate and sulfite: step 4/4. Functionally, involved in the biosynthesis of the coenzyme M (2-mercaptoethanesulfonic acid). Catalyzes the decarboxylation of sulfopyruvate to sulfoacetaldehyde. The sequence is that of Sulfopyruvate decarboxylase subunit alpha from Methanothermobacter thermautotrophicus (strain ATCC 29096 / DSM 1053 / JCM 10044 / NBRC 100330 / Delta H) (Methanobacterium thermoautotrophicum).